Here is a 152-residue protein sequence, read N- to C-terminus: Xanthine-guanine phosphoribosyltransferase (152 aa).

Residues 37–38 (RG), arginine 69, and 88–96 (DDLVDTGGT) each bind 5-phospho-alpha-D-ribose 1-diphosphate. Arginine 69 serves as a coordination point for GMP. Aspartate 89 provides a ligand contact to Mg(2+). Guanine contacts are provided by aspartate 92 and isoleucine 135. Aspartate 92 and isoleucine 135 together coordinate xanthine. GMP-binding positions include 92–96 (DTGGT) and 134–135 (WI).

It belongs to the purine/pyrimidine phosphoribosyltransferase family. XGPT subfamily. As to quaternary structure, homotetramer. The cofactor is Mg(2+).

The protein resides in the cell inner membrane. The enzyme catalyses GMP + diphosphate = guanine + 5-phospho-alpha-D-ribose 1-diphosphate. The catalysed reaction is XMP + diphosphate = xanthine + 5-phospho-alpha-D-ribose 1-diphosphate. It catalyses the reaction IMP + diphosphate = hypoxanthine + 5-phospho-alpha-D-ribose 1-diphosphate. It functions in the pathway purine metabolism; GMP biosynthesis via salvage pathway; GMP from guanine: step 1/1. It participates in purine metabolism; XMP biosynthesis via salvage pathway; XMP from xanthine: step 1/1. Purine salvage pathway enzyme that catalyzes the transfer of the ribosyl-5-phosphate group from 5-phospho-alpha-D-ribose 1-diphosphate (PRPP) to the N9 position of the 6-oxopurines guanine and xanthine to form the corresponding ribonucleotides GMP (guanosine 5'-monophosphate) and XMP (xanthosine 5'-monophosphate), with the release of PPi. To a lesser extent, also acts on hypoxanthine. The polypeptide is Xanthine-guanine phosphoribosyltransferase (Yersinia pseudotuberculosis serotype O:1b (strain IP 31758)).